The chain runs to 395 residues: Nicotinamide/nicotinic acid mononucleotide adenylyltransferase 2 (395 aa).

2 disordered regions span residues 1–34 (MDPTKAPDFKPPQPNEELQPPPDPTHTIPKSGPI) and 62–102 (KKNA…NGID). A compositionally biased stretch (pro residues) spans 9–24 (FKPPQPNEELQPPPDP). Serine 85, serine 89, and serine 90 each carry phosphoserine. 2 residues coordinate NAD(+): serine 167 and phenylalanine 168. Residues histidine 175 and arginine 209 each coordinate ATP. NAD(+) is bound by residues threonine 247, glycine 282, aspartate 284, tryptophan 295, arginine 314, and asparagine 345. An ATP-binding site is contributed by 350 to 353 (TKVR).

The protein belongs to the eukaryotic NMN adenylyltransferase family. Requires Co(2+) as cofactor.

It is found in the nucleus. The catalysed reaction is beta-nicotinamide D-ribonucleotide + ATP + H(+) = diphosphate + NAD(+). The enzyme catalyses nicotinate beta-D-ribonucleotide + ATP + H(+) = deamido-NAD(+) + diphosphate. It functions in the pathway cofactor biosynthesis; NAD(+) biosynthesis; deamido-NAD(+) from nicotinate D-ribonucleotide: step 1/1. Its pathway is cofactor biosynthesis; NAD(+) biosynthesis; NAD(+) from nicotinamide D-ribonucleotide: step 1/1. Functionally, catalyzes the formation of NAD(+) from nicotinamide mononucleotide (NMN) and ATP. Can also use the deamidated form; nicotinic acid mononucleotide (NaMN) as substrate to form deamido-NAD(+) (NaAD). Key enzyme in both de novo and salvage pathways for NAD(+) biosynthesis. Predominantly acts in the salvage pathways via NMN. This chain is Nicotinamide/nicotinic acid mononucleotide adenylyltransferase 2, found in Saccharomyces cerevisiae (strain ATCC 204508 / S288c) (Baker's yeast).